We begin with the raw amino-acid sequence, 337 residues long: Lipopolysaccharide 1,3-galactosyltransferase (337 aa).

UDP-binding positions include 33–38 and 130–131; these read GIDKNF and DA. Mg(2+) contacts are provided by Asp-130 and Asp-132. 2 short sequence motifs (DXD) span residues 130 to 132 and 219 to 221; these read DAD and DQD. Residue His-264 participates in Mg(2+) binding. 264–270 contributes to the UDP binding site; it reads HYIGPTK.

It belongs to the glycosyltransferase 8 family. Mg(2+) serves as cofactor.

The enzyme catalyses UDP-alpha-D-galactose + [lipopolysaccharide] = UDP + 3-alpha-D-galactosyl-[lipopolysaccharide].. The protein operates within bacterial outer membrane biogenesis; LPS core biosynthesis. Its activity is regulated as follows. Inhibited in a competitive manner by closely related nonsubstrate lipopolysaccharides. Functionally, galactosyltransferase involved in the biosynthesis of the core oligosaccharide region of lipopolysaccharide (LPS). Catalyzes the addition of an alpha l,3-linked galactose (galactose I) to the first outer-core glucose (glucose I). Cannot use UDP-glucose. Activity probably does not require the branched galactose added by WaaB, but it is higher in the presence of this branched galactose. In Salmonella typhimurium (strain LT2 / SGSC1412 / ATCC 700720), this protein is Lipopolysaccharide 1,3-galactosyltransferase.